The sequence spans 191 residues: Cell division protein SepF (191 aa).

Positions 150–191 (TSSSPEEASPSSVSPKNTPQYSVENNTAPEPAWGNSKLSAFS) are disordered. Residues 151–164 (SSSPEEASPSSVSP) show a composition bias toward low complexity. Residues 165–177 (KNTPQYSVENNTA) show a composition bias toward polar residues.

This sequence belongs to the SepF family. As to quaternary structure, homodimer. Interacts with FtsZ.

The protein localises to the cytoplasm. Its function is as follows. Cell division protein that is part of the divisome complex and is recruited early to the Z-ring. Probably stimulates Z-ring formation, perhaps through the cross-linking of FtsZ protofilaments. Its function overlaps with FtsA. The chain is Cell division protein SepF from Prochlorococcus marinus (strain MIT 9312).